We begin with the raw amino-acid sequence, 118 residues long: Ferredoxin-thioredoxin reductase, catalytic chain (118 aa).

Residue Cys-56 coordinates [4Fe-4S] cluster. Cys-58 functions as the Nucleophile in the catalytic mechanism. A disulfide bridge connects residues Cys-58 and Cys-88. 3 residues coordinate [4Fe-4S] cluster: Cys-75, Cys-77, and Cys-86.

It belongs to the ferredoxin thioredoxin reductase beta subunit family. Heterodimer of subunit A (variable subunit) and subunit B (catalytic subunit). Heterodimeric FTR forms a complex with ferredoxin and thioredoxin. [4Fe-4S] cluster serves as cofactor.

It catalyses the reaction [thioredoxin]-disulfide + 2 reduced [2Fe-2S]-[ferredoxin] + 2 H(+) = [thioredoxin]-dithiol + 2 oxidized [2Fe-2S]-[ferredoxin]. Its function is as follows. Catalytic subunit of the ferredoxin-thioredoxin reductase (FTR), which catalyzes the two-electron reduction of thioredoxins by the electrons provided by reduced ferredoxin. This Synechocystis sp. (strain ATCC 27184 / PCC 6803 / Kazusa) protein is Ferredoxin-thioredoxin reductase, catalytic chain.